An 892-amino-acid polypeptide reads, in one-letter code: DNA mismatch repair protein MutS (892 aa).

The tract at residues 663 to 684 (TNTSLREAAPTTTLSTSDQGQM) is disordered. 696–703 (GPNASGKS) lines the ATP pocket.

It belongs to the DNA mismatch repair MutS family.

In terms of biological role, this protein is involved in the repair of mismatches in DNA. It is possible that it carries out the mismatch recognition step. This protein has a weak ATPase activity. In Nostoc punctiforme (strain ATCC 29133 / PCC 73102), this protein is DNA mismatch repair protein MutS.